The primary structure comprises 499 residues: MENKYMLSLDQGTTSSRAILFDKSGAIIGVAQKEFTQIYPKPGWVEHNAEEIWESQLEVLKAVLLENHVKPEEIAGIGITNQRETTVVWDKHTGKPIHHAIVWQSRQSIDICNQLKEQGFEQTVREKTGLLIDAYFSGTKVKWLLDHVEGARERAEKGDLLFGTIDTWLIWKLTNGLVHVTDYSNASRTLMFNIHSLEWDDELLNMLQIPKSMLPAVRPSSEMYGYTDEKLFEFQIPIAGIAGDQQAALFGQACFAEGQAKNTYGTGCFMLMNTGEKAVASKNGLLTTIAWGVDGKVEYALEGSIFVAGAAIQWLRDGLKLIEKSSDSEKHALAVDTTDGVYMVPAFVGLGAPYWDMEARGAIFGLTRGTTEDHLIRAALESLAYQTRDVLEAMEADSGIRLQKLAVDGGAVANNFLMQFQSDILNTEVERPRVNETTALGAAYLAGLAVGYWGSKEDIVNNKVVERSFSPDMADEVRQGLYAGWKQAVTATMGYKIRH.

Residue threonine 13 coordinates ADP. 3 residues coordinate ATP: threonine 13, threonine 14, and serine 15. Threonine 13 contacts sn-glycerol 3-phosphate. Arginine 17 contacts ADP. Arginine 83, glutamate 84, tyrosine 135, and aspartate 244 together coordinate sn-glycerol 3-phosphate. The glycerol site is built by arginine 83, glutamate 84, tyrosine 135, aspartate 244, and glutamine 245. Residues threonine 266 and glycine 309 each contribute to the ADP site. ATP is bound by residues threonine 266, glycine 309, glutamine 313, and glycine 410. ADP is bound by residues glycine 410 and asparagine 414.

This sequence belongs to the FGGY kinase family. Homotetramer and homodimer (in equilibrium).

It carries out the reaction glycerol + ATP = sn-glycerol 3-phosphate + ADP + H(+). Its pathway is polyol metabolism; glycerol degradation via glycerol kinase pathway; sn-glycerol 3-phosphate from glycerol: step 1/1. With respect to regulation, activated by phosphorylation and inhibited by fructose 1,6-bisphosphate (FBP). In terms of biological role, key enzyme in the regulation of glycerol uptake and metabolism. Catalyzes the phosphorylation of glycerol to yield sn-glycerol 3-phosphate. The sequence is that of Glycerol kinase from Brevibacillus brevis (strain 47 / JCM 6285 / NBRC 100599).